Consider the following 113-residue polypeptide: UPF0122 protein LSEI_1603 (113 aa).

It belongs to the UPF0122 family.

Functionally, might take part in the signal recognition particle (SRP) pathway. This is inferred from the conservation of its genetic proximity to ftsY/ffh. May be a regulatory protein. In Lacticaseibacillus paracasei (strain ATCC 334 / BCRC 17002 / CCUG 31169 / CIP 107868 / KCTC 3260 / NRRL B-441) (Lactobacillus paracasei), this protein is UPF0122 protein LSEI_1603.